A 350-amino-acid polypeptide reads, in one-letter code: THUMP domain-containing protein 1 (350 aa).

Positions 1–10 (MATTAQQSPQ) are enriched in polar residues. Disordered regions lie at residues 1-42 (MATT…LEPG) and 75-96 (PEKFIDKDQQPSGSEGEDDDAE). Residue A2 is modified to N-acetylalanine. A phosphoserine mark is found at S8, S86, S88, and S119. The THUMP domain maps to 147-254 (DMYKTKKKKT…KAVCCLSVVK (108 aa)). S270 is subject to Phosphoserine. Over residues 270 to 292 (SAKDSQPHPKLGNGKEAKLEPDS) the composition is skewed to basic and acidic residues. The segment at 270 to 350 (SAKDSQPHPK…VPKTNENELS (81 aa)) is disordered.

It belongs to the THUMPD1 family. As to quaternary structure, interacts with NAT10. Binds tRNA.

Functionally, functions as a tRNA-binding adapter to mediate NAT10-dependent tRNA acetylation modifying cytidine to N4-acetylcytidine (ac4C). The polypeptide is THUMP domain-containing protein 1 (Thumpd1) (Mus musculus (Mouse)).